The chain runs to 280 residues: Tryptophan 2,3-dioxygenase (280 aa).

Substrate-binding positions include 49-53 (FIIIH), tyrosine 111, and arginine 115. Histidine 238 is a binding site for heme. Threonine 252 is a binding site for substrate.

Belongs to the tryptophan 2,3-dioxygenase family. As to quaternary structure, homotetramer. Heme serves as cofactor.

The catalysed reaction is L-tryptophan + O2 = N-formyl-L-kynurenine. Its pathway is amino-acid degradation; L-tryptophan degradation via kynurenine pathway; L-kynurenine from L-tryptophan: step 1/2. Its function is as follows. Heme-dependent dioxygenase that catalyzes the oxidative cleavage of the L-tryptophan (L-Trp) pyrrole ring and converts L-tryptophan to N-formyl-L-kynurenine. Catalyzes the oxidative cleavage of the indole moiety. The polypeptide is Tryptophan 2,3-dioxygenase (Geobacillus thermodenitrificans (strain NG80-2)).